The chain runs to 253 residues: Large ribosomal subunit protein uL4 (253 aa).

Residues 62–107 (WGSGRGVSHVPRLKNSSRAARVPHAKGGRRAHPPKPEADRSEKVNT) are disordered. A compositionally biased stretch (basic residues) spans 82-94 (RVPHAKGGRRAHP). Residues 95–107 (PKPEADRSEKVNT) are compositionally biased toward basic and acidic residues.

Belongs to the universal ribosomal protein uL4 family. Part of the 50S ribosomal subunit.

In terms of biological role, one of the primary rRNA binding proteins, this protein initially binds near the 5'-end of the 23S rRNA. It is important during the early stages of 50S assembly. It makes multiple contacts with different domains of the 23S rRNA in the assembled 50S subunit and ribosome. Forms part of the polypeptide exit tunnel. The chain is Large ribosomal subunit protein uL4 from Methanosarcina mazei (strain ATCC BAA-159 / DSM 3647 / Goe1 / Go1 / JCM 11833 / OCM 88) (Methanosarcina frisia).